The sequence spans 142 residues: Large ribosomal subunit protein uL13 (142 aa).

This sequence belongs to the universal ribosomal protein uL13 family. As to quaternary structure, part of the 50S ribosomal subunit.

Functionally, this protein is one of the early assembly proteins of the 50S ribosomal subunit, although it is not seen to bind rRNA by itself. It is important during the early stages of 50S assembly. The polypeptide is Large ribosomal subunit protein uL13 (Mannheimia succiniciproducens (strain KCTC 0769BP / MBEL55E)).